A 297-amino-acid polypeptide reads, in one-letter code: Putative 6-phosphogluconate dehydrogenase YqeC (297 aa).

NAD(+)-binding positions include G7 to G12 and N94. Residues N94 and S120–G122 each bind substrate. Catalysis depends on K170, which acts as the Proton acceptor. Residue H173–N174 participates in substrate binding. The active-site Proton donor is E177. Positions 178 and 268 each coordinate substrate.

The protein belongs to the 6-phosphogluconate dehydrogenase family.

May act as NAD-dependent 6-P-gluconate dehydrogenase. This chain is Putative 6-phosphogluconate dehydrogenase YqeC (yqeC), found in Bacillus subtilis (strain 168).